The primary structure comprises 122 residues: Large ribosomal subunit protein uL14 (122 aa).

Belongs to the universal ribosomal protein uL14 family. In terms of assembly, part of the 50S ribosomal subunit. Forms a cluster with proteins L3 and L19. In the 70S ribosome, L14 and L19 interact and together make contacts with the 16S rRNA in bridges B5 and B8.

Functionally, binds to 23S rRNA. Forms part of two intersubunit bridges in the 70S ribosome. The chain is Large ribosomal subunit protein uL14 from Streptococcus agalactiae serotype Ia (strain ATCC 27591 / A909 / CDC SS700).